The following is a 354-amino-acid chain: Protein RecA (354 aa).

Position 65 to 72 (65 to 72 (GPESSGKT)) interacts with ATP.

This sequence belongs to the RecA family.

The protein localises to the cytoplasm. Can catalyze the hydrolysis of ATP in the presence of single-stranded DNA, the ATP-dependent uptake of single-stranded DNA by duplex DNA, and the ATP-dependent hybridization of homologous single-stranded DNAs. It interacts with LexA causing its activation and leading to its autocatalytic cleavage. This is Protein RecA from Pseudomonas syringae pv. syringae (strain B728a).